Reading from the N-terminus, the 78-residue chain is Conotoxin ArMKLT2-0313 (78 aa).

The signal sequence occupies residues 1-22 (MKLTCVLIIAVLCLTVCQLITA). The propeptide occupies 23–47 (DYLRDKQKYRSVRLRDGMLNFKGSR). Position 48 is a pyrrolidone carboxylic acid (glutamine 48). 3 disulfide bridges follow: cysteine 49/cysteine 62, cysteine 56/cysteine 67, and cysteine 61/cysteine 75.

The protein belongs to the conotoxin O1 superfamily. Expressed by the venom duct.

The protein localises to the secreted. The sequence is that of Conotoxin ArMKLT2-0313 from Conus arenatus (Sand-dusted cone).